We begin with the raw amino-acid sequence, 1342 residues long: Cytokinesis protein sepH (1342 aa).

The segment covering 1 to 10 (MVSRSSEGAE) has biased composition (low complexity). The interval 1–47 (MVSRSSEGAEGPPPSAPKPPNTPAKSRLSRLGSSPSKREDKSRDDRM) is disordered. Residues 11–22 (GPPPSAPKPPNT) are compositionally biased toward pro residues. The segment covering 36–47 (SKREDKSRDDRM) has biased composition (basic and acidic residues). One can recognise a Protein kinase domain in the interval 61 to 308 (YQLGDCLGKG…ARKLLKHPWI (248 aa)). ATP contacts are provided by residues 67–75 (LGKGAFGSV) and Lys-90. Asp-180 serves as the catalytic Proton acceptor. Disordered regions lie at residues 336-396 (NEAL…EEDN), 441-486 (IKSD…QLQE), and 552-591 (ADEN…ISVK). The segment covering 369–379 (KDTLPSPVSRN) has biased composition (polar residues). Residues 658–695 (FAQLEEGLDEMDLEANIARDKHARLRNQVEGLVSSLKT) adopt a coiled-coil conformation. The interval 1201 to 1342 (SEAYGMGKRK…QTQADADWTP (142 aa)) is disordered. A compositionally biased stretch (basic residues) spans 1207–1217 (GKRKPMVRRRS). Polar residues-rich tracts occupy residues 1218 to 1244 (TSAT…SQSK) and 1273 to 1290 (DGST…TGAS). Low complexity predominate over residues 1315–1324 (RPSSSLSRRQ).

The protein belongs to the protein kinase superfamily. Ser/Thr protein kinase family. CDC7 subfamily. Mg(2+) serves as cofactor.

The enzyme catalyses L-seryl-[protein] + ATP = O-phospho-L-seryl-[protein] + ADP + H(+). The catalysed reaction is L-threonyl-[protein] + ATP = O-phospho-L-threonyl-[protein] + ADP + H(+). Required for early events during cytokinesis including localization of cytoskeletal components to the cytokinetic ring. The sequence is that of Cytokinesis protein sepH from Aspergillus terreus (strain NIH 2624 / FGSC A1156).